A 389-amino-acid polypeptide reads, in one-letter code: Probable inactive purple acid phosphatase 29 (389 aa).

A signal peptide spans Met-1 to Ala-34. Residue Asn-80 is glycosylated (N-linked (GlcNAc...) asparagine). Residue Asn-136 participates in substrate binding. Asn-136 is a binding site for Zn(2+). Asn-191 and Asn-267 each carry an N-linked (GlcNAc...) asparagine glycan. Residue His-303 coordinates Zn(2+). His-303–His-305 contributes to the substrate binding site. A Fe cation-binding site is contributed by His-305. Asn-380 carries N-linked (GlcNAc...) asparagine glycosylation.

The protein belongs to the metallophosphoesterase superfamily. Purple acid phosphatase family. In terms of assembly, homodimer. It depends on Fe cation as a cofactor. Zn(2+) serves as cofactor. In terms of tissue distribution, expressed in roots, stems, leaves, flowers and siliques.

Its subcellular location is the secreted. The sequence is that of Probable inactive purple acid phosphatase 29 (PAP29) from Arabidopsis thaliana (Mouse-ear cress).